We begin with the raw amino-acid sequence, 571 residues long: MKVLVTSAWPYVNAVPHLGNLIGSILSADVFARYARLKYGKENVVFVSGSDEHGTPIEIEARKRNIEPKKLTDQAHAYDKKLFIDTWKISFDNYSRTESEVHKEFVRNFLVKLEKYIKVEEDEIPYCEKDKLFLPDRFIKGVCPYCGFEDARGDQCDNCGRLLTPRSLVNAKCALCGNPPVFKVTKHWFFDLSEFGDKIRDWISSSSTMPDNVKSVALSWVKEGLRPRSITRDNMWGIPAPFAGAENKTIYVWFEALLGYLSATVEYFKNLGKEEMWKEFWLYNDTKTYYFIGKDNIPFHAVILPAMLMASNEKYNLPSVIAATEYLLYEGQKFSKSRKIGVWIDEADKLMDVEYWRFILIRLRPEEKDTNFTWREALRIVNTELNDDIGNYANRVLSMVKRYYDGVVPSPKEAIFNDEDKNLITLIKESPKRMGELFELGKIKAGSEEILKLARSGNLYLNNRAPWSLVKTNKEEANNVLYISVNSLRTLAIMLYPIMPTYSSNLYQQLGLSNLESETWDSAGSLKIMPGHKIGEIRSLFKKIEMSPEELMKKLDEIRREVEKERPDLLR.

The 'HIGH' region signature appears at 10-20; sequence PYVNAVPHLGN. Positions 143, 146, 156, and 159 each coordinate Zn(2+). Residues 333 to 337 carry the 'KMSKS' region motif; sequence KFSKS. An ATP-binding site is contributed by Lys336.

It belongs to the class-I aminoacyl-tRNA synthetase family. MetG type 1 subfamily. It depends on Zn(2+) as a cofactor.

Its subcellular location is the cytoplasm. The catalysed reaction is tRNA(Met) + L-methionine + ATP = L-methionyl-tRNA(Met) + AMP + diphosphate. Functionally, is required not only for elongation of protein synthesis but also for the initiation of all mRNA translation through initiator tRNA(fMet) aminoacylation. This Sulfolobus acidocaldarius (strain ATCC 33909 / DSM 639 / JCM 8929 / NBRC 15157 / NCIMB 11770) protein is Methionine--tRNA ligase.